The chain runs to 486 residues: Protein ZINC INDUCED FACILITATOR 1 (486 aa).

Transmembrane regions (helical) follow at residues 41–61 (FVWI…PFLY), 82–102 (FVGC…GIVA), 109–129 (PIIL…GLSS), 131–151 (FWMA…LGTM), 170–190 (AVST…GFLA), 212–232 (ALPC…CCFI), 288–308 (IIVY…FALW), 327–347 (TVLA…YPLA), 362–384 (ALMI…SLSL), 391–408 (ILIN…LILQ), 423–443 (IAMT…GILF), and 461–481 (VFFV…KPFL).

It belongs to the major facilitator superfamily. In terms of tissue distribution, strongly expressed in developing leaves, differentiating zones of root tips and sepals of developing flowers. Restricted to vascular tissues in older leaves, mature roots, flowers, anthers and filaments. Not expressed in developing anthers.

It localises to the vacuole membrane. Major facilitator superfamily (MFS) transporter involved in zinc tolerance by participating in vacuolar sequestration of zinc. The protein is Protein ZINC INDUCED FACILITATOR 1 (ZIF1) of Arabidopsis thaliana (Mouse-ear cress).